Consider the following 881-residue polypeptide: Sodium/potassium/calcium exchanger Nckx30C (881 aa).

At 1–194 (MLQPTTCSKQ…SRCRSRRCLR (194 aa)) the chain is on the extracellular side. An N-linked (GlcNAc...) asparagine glycan is attached at Asn-69. 4 disordered regions span residues 79 to 111 (DMLSAGRSRSSSTTIDFNSRRRRGRLRGHAPSD), 149 to 181 (AKTRSRTAAQLPATSAASATSSRGASAEQLLHP), 215 to 255 (AAKP…TSGE), and 272 to 315 (GLEE…TTKT). Over residues 85 to 95 (RSRSSSTTIDF) the composition is skewed to polar residues. Positions 149-175 (AKTRSRTAAQLPATSAASATSSRGASA) are enriched in low complexity. A helical membrane pass occupies residues 195–215 (LPIYSILLLCLTTQGLGLGDA). The Cytoplasmic segment spans residues 216 to 330 (AKPRPAKQHF…DLFTKEQLEN (115 aa)). Residues 228 to 240 (SNSNSPNQNQNHN) are compositionally biased toward low complexity. Residues 296 to 315 (AGNQRGINDTHNDNSTTTKT) are compositionally biased toward polar residues. The helical transmembrane segment at 331–351 (GAVILHIIGVIYMFVALAIVC) threads the bilayer. Residues 352 to 375 (DEFFVPSLDVIIEKLGITDDVAGA) are Extracellular-facing. One copy of the Alpha-1 repeat lies at 372–412 (VAGATFMAAGGSAPELFTSVIGVFVSFDDVGIGTIVGSAVF). Residues 376-396 (TFMAAGGSAPELFTSVIGVFV) traverse the membrane as a helical segment. Over 397–402 (SFDDVG) the chain is Cytoplasmic. A helical transmembrane segment spans residues 403 to 423 (IGTIVGSAVFNILFVIGMCAL). The Extracellular portion of the chain corresponds to 424–433 (FSKTVLSLTW). The helical transmembrane segment at 434-454 (WPLFRDCSFYSISLLVLIYFF) threads the bilayer. The Cytoplasmic segment spans residues 455-458 (RDNR). The helical transmembrane segment at 459–479 (IFWWEALILFTIYIGYVAFMK) threads the bilayer. The Extracellular portion of the chain corresponds to 480 to 720 (WNVQVETCVK…PDTRTPRGKR (241 aa)). The segment at 508–565 (PAGNAANSSETSMATQPGGSVTSRAASETRSGPPGSSNAGATGNSSGGGGTSGSTQTG) is disordered. Over residues 512–537 (AANSSETSMATQPGGSVTSRAASETR) the composition is skewed to polar residues. 2 N-linked (GlcNAc...) asparagine glycosylation sites follow: Asn-514 and Asn-551. Residues 542–551 (GSSNAGATGN) are compositionally biased toward low complexity. A helical membrane pass occupies residues 721–741 (FFPVTFIGSIVWIAAFSYLMV). Residues 742 to 756 (WWANVAGDTARIPPE) are Cytoplasmic-facing. A helical membrane pass occupies residues 757–777 (VMGLTFLAAGTSIPDLITSVI). One copy of the Alpha-2 repeat lies at 764 to 795 (AAGTSIPDLITSVIVARKGFGDMAVSSSVGSN). Residues 778–795 (VARKGFGDMAVSSSVGSN) are Extracellular-facing. Residues 796–816 (IFDVTVGLPIPWLLYGIIYGA) form a helical membrane-spanning segment. The Cytoplasmic portion of the chain corresponds to 817–822 (PVEVNS). Residues 823–843 (VGMVCSITILFMMLVFVVMSI) traverse the membrane as a helical segment. Residues 844-852 (ACFRWRMNK) are Extracellular-facing. Residues 853-873 (GLGFTMFLLYFAFVAVSLMFE) form a helical membrane-spanning segment. Residues 874–881 (YDVITCPF) lie on the Cytoplasmic side of the membrane.

It belongs to the Ca(2+):cation antiporter (CaCA) (TC 2.A.19) family. SLC24A subfamily. As to expression, expressed in the adult nervous system. Expressed in the photoreceptor cells as well as in the lamina, medulla, and optic lobes of the brain.

The protein resides in the membrane. May function in the removal and maintenance of calcium homeostasis during signaling in the adult and in signaling events during embryogenesis and patterning of imaginal disks. Transports one Ca(2+) and 1 K(+) in exchange for 4 Na(+). In Drosophila melanogaster (Fruit fly), this protein is Sodium/potassium/calcium exchanger Nckx30C (Nckx30C).